A 162-amino-acid chain; its full sequence is NADH-quinone oxidoreductase subunit I (162 aa).

4Fe-4S ferredoxin-type domains lie at 53–83 (LRRYPNGEERCIACKLCEAVCPAMAITIESE) and 93–122 (TRYDIDMIKCIFCGFCEEACPVDAIVETRV). 8 residues coordinate [4Fe-4S] cluster: Cys-63, Cys-66, Cys-69, Cys-73, Cys-102, Cys-105, Cys-108, and Cys-112.

It belongs to the complex I 23 kDa subunit family. In terms of assembly, NDH-1 is composed of 14 different subunits. Subunits NuoA, H, J, K, L, M, N constitute the membrane sector of the complex. It depends on [4Fe-4S] cluster as a cofactor.

It is found in the cell inner membrane. The enzyme catalyses a quinone + NADH + 5 H(+)(in) = a quinol + NAD(+) + 4 H(+)(out). Its function is as follows. NDH-1 shuttles electrons from NADH, via FMN and iron-sulfur (Fe-S) centers, to quinones in the respiratory chain. The immediate electron acceptor for the enzyme in this species is believed to be ubiquinone. Couples the redox reaction to proton translocation (for every two electrons transferred, four hydrogen ions are translocated across the cytoplasmic membrane), and thus conserves the redox energy in a proton gradient. This chain is NADH-quinone oxidoreductase subunit I, found in Nitrosomonas europaea (strain ATCC 19718 / CIP 103999 / KCTC 2705 / NBRC 14298).